A 155-amino-acid chain; its full sequence is Small ribosomal subunit protein uS9 (155 aa).

Belongs to the universal ribosomal protein uS9 family.

In Rhizobium meliloti (strain 1021) (Ensifer meliloti), this protein is Small ribosomal subunit protein uS9.